The following is a 356-amino-acid chain: S-adenosylmethionine:tRNA ribosyltransferase-isomerase (356 aa).

The protein belongs to the QueA family. As to quaternary structure, monomer.

The protein resides in the cytoplasm. The enzyme catalyses 7-aminomethyl-7-carbaguanosine(34) in tRNA + S-adenosyl-L-methionine = epoxyqueuosine(34) in tRNA + adenine + L-methionine + 2 H(+). It participates in tRNA modification; tRNA-queuosine biosynthesis. In terms of biological role, transfers and isomerizes the ribose moiety from AdoMet to the 7-aminomethyl group of 7-deazaguanine (preQ1-tRNA) to give epoxyqueuosine (oQ-tRNA). This Xanthomonas oryzae pv. oryzae (strain KACC10331 / KXO85) protein is S-adenosylmethionine:tRNA ribosyltransferase-isomerase.